The chain runs to 334 residues: Methionyl-tRNA formyltransferase (334 aa).

111-114 is a (6S)-5,6,7,8-tetrahydrofolate binding site; sequence SILP.

Belongs to the Fmt family.

It catalyses the reaction L-methionyl-tRNA(fMet) + (6R)-10-formyltetrahydrofolate = N-formyl-L-methionyl-tRNA(fMet) + (6S)-5,6,7,8-tetrahydrofolate + H(+). Functionally, attaches a formyl group to the free amino group of methionyl-tRNA(fMet). The formyl group appears to play a dual role in the initiator identity of N-formylmethionyl-tRNA by promoting its recognition by IF2 and preventing the misappropriation of this tRNA by the elongation apparatus. The chain is Methionyl-tRNA formyltransferase from Trichormus variabilis (strain ATCC 29413 / PCC 7937) (Anabaena variabilis).